The chain runs to 428 residues: L-rhamnose isomerase (428 aa).

His-260, Asp-292, and Asp-294 together coordinate Mn(2+).

Belongs to the rhamnose isomerase family. The cofactor is Mn(2+).

The protein resides in the cytoplasm. It carries out the reaction L-rhamnopyranose = L-rhamnulose. It participates in carbohydrate degradation; L-rhamnose degradation; glycerone phosphate from L-rhamnose: step 1/3. Functionally, catalyzes the interconversion of L-rhamnose and L-rhamnulose. The sequence is that of L-rhamnose isomerase from Enterococcus faecalis (strain ATCC 700802 / V583).